The following is a 956-amino-acid chain: DNA replication helicase (956 aa).

120–127 (GTAGAGKT) is an ATP binding site. The tract at residues 658-694 (PINNHVDADSSQGGQSVPVSQRMEHGQEETHDIPCLS) is disordered. Over residues 667 to 678 (SSQGGQSVPVSQ) the composition is skewed to low complexity. Residues 679 to 694 (RMEHGQEETHDIPCLS) show a composition bias toward basic and acidic residues.

This sequence belongs to the herpesviridae helicase family. In terms of assembly, associates with the primase and the primase-associated factor to form the helicase-primase complex.

It localises to the host nucleus. Component of the helicase/primase complex. Unwinds the DNA at the replication forks and generates single-stranded DNA for both leading and lagging strand synthesis. The primase synthesizes short RNA primers on the lagging strand that the polymerase elongates using dNTPs. Possesses helicase-like motifs and therefore may act as the helicase subunit of the complex. The sequence is that of DNA replication helicase from Human cytomegalovirus (strain AD169) (HHV-5).